Reading from the N-terminus, the 486-residue chain is Ribulose bisphosphate carboxylase large chain 1 (486 aa).

Substrate is bound by residues Asn-125 and Thr-175. Catalysis depends on Lys-177, which acts as the Proton acceptor. Substrate is bound at residue Lys-179. Mg(2+)-binding residues include Lys-203, Asp-205, and Glu-206. N6-carboxylysine is present on Lys-203. His-295 serves as the catalytic Proton acceptor. Positions 296, 328, and 380 each coordinate substrate.

It belongs to the RuBisCO large chain family. Type I subfamily. As to quaternary structure, heterohexadecamer of 8 large chains and 8 small chains. The cofactor is Mg(2+).

It catalyses the reaction 2 (2R)-3-phosphoglycerate + 2 H(+) = D-ribulose 1,5-bisphosphate + CO2 + H2O. It carries out the reaction D-ribulose 1,5-bisphosphate + O2 = 2-phosphoglycolate + (2R)-3-phosphoglycerate + 2 H(+). Its function is as follows. RuBisCO catalyzes two reactions: the carboxylation of D-ribulose 1,5-bisphosphate, the primary event in carbon dioxide fixation, as well as the oxidative fragmentation of the pentose substrate. Both reactions occur simultaneously and in competition at the same active site. The polypeptide is Ribulose bisphosphate carboxylase large chain 1 (Bradyrhizobium sp. (strain ORS 278)).